A 215-amino-acid polypeptide reads, in one-letter code: 7-cyano-7-deazaguanine synthase (215 aa).

ATP is bound at residue L8–L18. Zn(2+) contacts are provided by C191, C199, C202, and C205.

It belongs to the QueC family. Homodimer. It depends on Zn(2+) as a cofactor.

It carries out the reaction 7-carboxy-7-deazaguanine + NH4(+) + ATP = 7-cyano-7-deazaguanine + ADP + phosphate + H2O + H(+). It participates in purine metabolism; 7-cyano-7-deazaguanine biosynthesis. Catalyzes the ATP-dependent conversion of 7-carboxy-7-deazaguanine (CDG) to 7-cyano-7-deazaguanine (preQ(0)). The sequence is that of 7-cyano-7-deazaguanine synthase from Carboxydothermus hydrogenoformans (strain ATCC BAA-161 / DSM 6008 / Z-2901).